Consider the following 238-residue polypeptide: Uridylate kinase (238 aa).

ATP is bound at residue 12–15; it reads KLSG. Residue G54 coordinates UMP. ATP-binding residues include G55 and R59. UMP-binding positions include D74 and 135–142; that span reads TGNPFFTT. 4 residues coordinate ATP: T162, N163, Y168, and D171.

The protein belongs to the UMP kinase family. Homohexamer.

It is found in the cytoplasm. It catalyses the reaction UMP + ATP = UDP + ADP. It functions in the pathway pyrimidine metabolism; CTP biosynthesis via de novo pathway; UDP from UMP (UMPK route): step 1/1. Inhibited by UTP. Functionally, catalyzes the reversible phosphorylation of UMP to UDP. This is Uridylate kinase from Rhodopseudomonas palustris (strain BisB18).